The primary structure comprises 1130 residues: ABC transporter ATM1 (1130 aa).

The transit peptide at 1–65 directs the protein to the mitochondrion; it reads MQPPTRAPFF…ESFHSSAFQL (65 aa). Disordered regions lie at residues 191 to 212, 276 to 315, and 341 to 385; these read DAWTSGCSGQTDNATASPCVRP, HHAPLSRHSLQSLPESRIRGGTVSRGDSPGSLTLSPRNMS, and STFS…TSSP. Composition is skewed to polar residues over residues 195–206 and 305–315; these read SGCSGQTDNATA and GSLTLSPRNMS. The chain crosses the membrane as a helical span at residues 406-426; that stretch reads PNPTSLQLLFSLFPFLWPTAL. Positions 468 to 502 are enriched in low complexity; it reads PLSPSGASPSSGDTSLLASSGETSSSLSPSAAPAE. Residues 468 to 554 form a disordered region; sequence PLSPSGASPS…AGKAGTSVGG (87 aa). The span at 503 to 523 shows a compositional bias: basic and acidic residues; the sequence is GAREAGKSGESAGRERRDEGS. Helical transmembrane passes span 574 to 594, 653 to 673, 678 to 698, 761 to 781, and 791 to 811; these read IVSVPLGVVCGFPVARIAATG, VLLFQMVPTALEFALVLYLLG, GPVACITSLTMAVYVAFTAAV, LAFLNFGQQLIFNVGVLGSLA, and LLPVGHIVLVSSLLLQLAVPL. The 237-residue stretch at 587–823 folds into the ABC transmembrane type-1 domain; the sequence is VARIAATGFN…VGTIYRETSL (237 aa). In terms of domain architecture, ABC transporter spans 857-1111; that stretch reads VAFENVRFAY…ERGLYRALWE (255 aa). Residue 910–917 coordinates ATP; that stretch reads GPSGVGKS.

Belongs to the ABC transporter superfamily. ABCB family. Heavy Metal importer (TC 3.A.1.210) subfamily. As to quaternary structure, homodimer.

The protein localises to the mitochondrion membrane. Its function is as follows. Probably transports iron-sulfur clusters in an ATP-dependent manner. Plays a role in [Fe-S] proteins homeostasis. Required for optimal parasite growth and lytic cycle. This is ABC transporter ATM1 from Toxoplasma gondii (strain ATCC 50611 / Me49).